A 509-amino-acid chain; its full sequence is Dihydrolipoyl dehydrogenase, mitochondrial (509 aa).

A mitochondrion-targeting transit peptide spans 1–35; it reads MQSWSRVYCSLAKRGHFNRISHGLQGLSAVPLRTY. N6-acetyllysine; alternate is present on lysine 66. Lysine 66 carries the post-translational modification N6-succinyllysine; alternate. Residues 71–80 and lysine 89 contribute to the FAD site; that span reads EKNETLGGTC. Cysteine 80 and cysteine 85 form a disulfide bridge. Residues lysine 104, lysine 122, lysine 132, and lysine 143 each carry the N6-acetyllysine; alternate modification. Residues lysine 104, lysine 122, lysine 132, and lysine 143 each carry the N6-succinyllysine; alternate modification. FAD is bound at residue glycine 154. Residues lysine 159 and lysine 166 each carry the N6-succinyllysine modification. 183 to 185 provides a ligand contact to FAD; sequence TGS. NAD(+) contacts are provided by residues 220–227 and glutamate 243; that span reads GAGVIGVE. N6-succinyllysine is present on residues lysine 273 and lysine 277. Valine 278 serves as a coordination point for NAD(+). Residues serine 285 and serine 297 each carry the phosphoserine modification. Glycine 314 contributes to the NAD(+) binding site. Residue lysine 346 is modified to N6-acetyllysine. Residues aspartate 355 and 361–364 each bind FAD; that span reads MLAH. Lysine 410 is modified (N6-acetyllysine; alternate). N6-succinyllysine; alternate is present on lysine 410. N6-acetyllysine is present on residues lysine 417 and lysine 420. N6-succinyllysine is present on lysine 430. Residue histidine 487 is the Proton acceptor of the active site. Serine 502 carries the phosphoserine modification. Lysine 505 carries the N6-acetyllysine; alternate modification. Lysine 505 carries the N6-succinyllysine; alternate modification.

This sequence belongs to the class-I pyridine nucleotide-disulfide oxidoreductase family. Homodimer. Part of the multimeric pyruvate dehydrogenase complex that contains multiple copies of pyruvate dehydrogenase (subunits PDHA (PDHA1 or PDHA2) and PDHB, E1), dihydrolipoamide acetyltransferase (DLAT, E2) and lipoamide dehydrogenase (DLD, E3). These subunits are bound to an inner core composed of about 48 DLAT and 12 PDHX molecules (by non covalent bonds). The 2-oxoglutarate dehydrogenase complex is composed of OGDH (2-oxoglutarate dehydrogenase; E1), DLST (dihydrolipoamide succinyltransferase; E2), DLD (dihydrolipoamide dehydrogenase; E3) and the assembly factor KGD4. It contains multiple copies of the three enzymatic components (E1, E2 and E3). In the nucleus, the 2-oxoglutarate dehydrogenase complex associates with KAT2A. Interacts with PDHX. FAD is required as a cofactor. In terms of processing, tyrosine phosphorylated.

The protein localises to the mitochondrion matrix. The protein resides in the nucleus. Its subcellular location is the cell projection. It localises to the cilium. It is found in the flagellum. The protein localises to the cytoplasmic vesicle. The protein resides in the secretory vesicle. Its subcellular location is the acrosome. The enzyme catalyses N(6)-[(R)-dihydrolipoyl]-L-lysyl-[protein] + NAD(+) = N(6)-[(R)-lipoyl]-L-lysyl-[protein] + NADH + H(+). Lipoamide dehydrogenase is a component of the glycine cleavage system as well as an E3 component of three alpha-ketoacid dehydrogenase complexes (pyruvate-, alpha-ketoglutarate-, and branched-chain amino acid-dehydrogenase complex). The 2-oxoglutarate dehydrogenase complex is mainly active in the mitochondrion. A fraction of the 2-oxoglutarate dehydrogenase complex also localizes in the nucleus and is required for lysine succinylation of histones: associates with KAT2A on chromatin and provides succinyl-CoA to histone succinyltransferase KAT2A. In monomeric form may have additional moonlighting function as serine protease. Involved in the hyperactivation of spermatazoa during capacitation and in the spermatazoal acrosome reaction. The polypeptide is Dihydrolipoyl dehydrogenase, mitochondrial (DLD) (Macaca fascicularis (Crab-eating macaque)).